Consider the following 344-residue polypeptide: tRNA N6-adenosine threonylcarbamoyltransferase (344 aa).

Fe cation-binding residues include histidine 111 and histidine 115. Substrate contacts are provided by residues leucine 133 to glycine 137, aspartate 166, glycine 179, and asparagine 283. Aspartate 311 lines the Fe cation pocket.

It belongs to the KAE1 / TsaD family. Fe(2+) is required as a cofactor.

It localises to the cytoplasm. It carries out the reaction L-threonylcarbamoyladenylate + adenosine(37) in tRNA = N(6)-L-threonylcarbamoyladenosine(37) in tRNA + AMP + H(+). In terms of biological role, required for the formation of a threonylcarbamoyl group on adenosine at position 37 (t(6)A37) in tRNAs that read codons beginning with adenine. Is involved in the transfer of the threonylcarbamoyl moiety of threonylcarbamoyl-AMP (TC-AMP) to the N6 group of A37, together with TsaE and TsaB. TsaD likely plays a direct catalytic role in this reaction. This chain is tRNA N6-adenosine threonylcarbamoyltransferase, found in Orientia tsutsugamushi (strain Ikeda) (Rickettsia tsutsugamushi).